We begin with the raw amino-acid sequence, 380 residues long: Histidinol-phosphate aminotransferase (380 aa).

N6-(pyridoxal phosphate)lysine is present on lysine 235.

It belongs to the class-II pyridoxal-phosphate-dependent aminotransferase family. Histidinol-phosphate aminotransferase subfamily. In terms of assembly, homodimer. Pyridoxal 5'-phosphate serves as cofactor.

The enzyme catalyses L-histidinol phosphate + 2-oxoglutarate = 3-(imidazol-4-yl)-2-oxopropyl phosphate + L-glutamate. Its pathway is amino-acid biosynthesis; L-histidine biosynthesis; L-histidine from 5-phospho-alpha-D-ribose 1-diphosphate: step 7/9. In Rhodococcus jostii (strain RHA1), this protein is Histidinol-phosphate aminotransferase.